Consider the following 35-residue polypeptide: Photosystem II reaction center protein Y (35 aa).

Over 1-4 the chain is Lumenal; sequence MDTR. A helical transmembrane segment spans residues 5–23; sequence LLVVLLPVATAAAWALFNI. The Stromal portion of the chain corresponds to 24–35; that stretch reads GRLALQQLKRMS.

It belongs to the PsbY family. As to quaternary structure, PSII is composed of 1 copy each of membrane proteins PsbA, PsbB, PsbC, PsbD, PsbE, PsbF, PsbH, PsbI, PsbJ, PsbK, PsbL, PsbM, PsbT, PsbX, PsbY, PsbZ, Psb30/Ycf12, at least 3 peripheral proteins of the oxygen-evolving complex and a large number of cofactors. It forms dimeric complexes.

The protein resides in the plastid. The protein localises to the chloroplast thylakoid membrane. Its function is as follows. Loosely associated component of the core of photosystem II (PSII), it is not always seen in crystals. PSII is a light-driven water plastoquinone oxidoreductase, using light energy to abstract electrons from H(2)O, generating a proton gradient subsequently used for ATP formation. The protein is Photosystem II reaction center protein Y of Emiliania huxleyi (Coccolithophore).